The sequence spans 367 residues: UDP-N-acetylenolpyruvoylglucosamine reductase 2 (367 aa).

The 168-residue stretch at 31–198 folds into the FAD-binding PCMH-type domain; the sequence is IGGKPRSAVR…LAIELQLLTD (168 aa). Residue Arg176 is part of the active site. Ser256 (proton donor) is an active-site residue. Glu357 is an active-site residue.

It belongs to the MurB family. It depends on FAD as a cofactor.

It is found in the cytoplasm. The catalysed reaction is UDP-N-acetyl-alpha-D-muramate + NADP(+) = UDP-N-acetyl-3-O-(1-carboxyvinyl)-alpha-D-glucosamine + NADPH + H(+). Its pathway is cell wall biogenesis; peptidoglycan biosynthesis. Cell wall formation. This Corynebacterium glutamicum (strain ATCC 13032 / DSM 20300 / JCM 1318 / BCRC 11384 / CCUG 27702 / LMG 3730 / NBRC 12168 / NCIMB 10025 / NRRL B-2784 / 534) protein is UDP-N-acetylenolpyruvoylglucosamine reductase 2 (murB2).